Here is a 194-residue protein sequence, read N- to C-terminus: Large ribosomal subunit protein uL5 (194 aa).

This sequence belongs to the universal ribosomal protein uL5 family. In terms of assembly, part of the 50S ribosomal subunit; part of the 5S rRNA/L5/L18/L25 subcomplex. Contacts the 5S rRNA and the P site tRNA. Forms a bridge to the 30S subunit in the 70S ribosome.

This is one of the proteins that bind and probably mediate the attachment of the 5S RNA into the large ribosomal subunit, where it forms part of the central protuberance. In the 70S ribosome it contacts protein S13 of the 30S subunit (bridge B1b), connecting the 2 subunits; this bridge is implicated in subunit movement. Contacts the P site tRNA; the 5S rRNA and some of its associated proteins might help stabilize positioning of ribosome-bound tRNAs. The polypeptide is Large ribosomal subunit protein uL5 (Chlorobium luteolum (strain DSM 273 / BCRC 81028 / 2530) (Pelodictyon luteolum)).